The primary structure comprises 1214 residues: Protein charlatan (1214 aa).

Disordered stretches follow at residues 1-20 (MATLIPVNGGHPAASGQSSN), 213-238 (HVNQQQQQQQQPHQSTPKSKKHRQEH), and 250-284 (SANAAQNLAQSTPTSAPSNSSGGSTSSSGGGGGRK). The segment covering 258-276 (AQSTPTSAPSNSSGGSTSS) has biased composition (low complexity). 2 consecutive C2H2-type zinc fingers follow at residues 305–327 (YACTHCPYSTDRRDLYTRHENIH) and 333–356 (FQCYACLKQFNRADHVKKHFLRMH). 2 disordered regions span residues 367–397 (RRHVSAGSGSSGSGSSGSGSHHSGGRGNVTI) and 463–488 (PVASSSSGSSGSHGGNGNGGSGSGLL). The span at 473 to 485 (GSHGGNGNGGSGS) shows a compositional bias: gly residues. 2 C2H2-type zinc fingers span residues 496 to 518 (FTCCYCPWSGADKWGLKRHLNTH) and 522 to 545 (FVCLLCDYKAARSERLATHVLKVH). Disordered stretches follow at residues 741-790 (SASS…ATSP), 848-946 (NDED…SGPS), and 1062-1084 (LSTPRRSPKKAAPAHSNSASNAS). Composition is skewed to low complexity over residues 855-871 (QQHQPHQQHHSQQQQQQ), 885-896 (NNNNNNNSNNNN), 923-946 (SPGTAAVSVAAAAATSPPSISGPS), and 1071-1084 (KAAPAHSNSASNAS).

In terms of tissue distribution, expressed in the PNS and CNS. In early blastoderm stages, it is ubiquitously expressed, then, before stage 5, it disappears from the poles of the embryo and faint stripes are visible. At stage 5, it also accumulates in the dorsal region, cephalic furrow ectodermal patches between the tracheal pits, where neurons of the PNS appear. In older embryos (stage 15) a strong expression is mostly restricted to the central nervous system (CNS) and PNS. In PNS, the pattern suggests that expression occur in many of the neurons of the ventral, lateral and dorsal clusters of neurons. In third instar wing disks, it is expressed in rows of cells on either side of the prospective anterior wing margin and in groups of cells that coincide with proneural clusters of ac/sc expression. Also expressed independently of ac/sc in certain areas of the disk, such as the postnotum and posterior dorsal proximal wing. Expressed in the proneural clusters of the leg disks and in the eye/antenna disk.

The protein resides in the nucleus. Probable transcription factor involved in the development of the adult pattern of macrochaetae. Required for accumulation of achaete (ac) and scute (sc) in proneural clusters. Probably acts by binding to the proneural cluster-specific enhancers of the ac/sc complex and increasing enhancer efficiency, thereby acting as a stimulator of ac/sc expression in proneural clusters. Also required for correct development of the embryonic/larval peripheral nervous system (PNS). The sequence is that of Protein charlatan (chn) from Drosophila melanogaster (Fruit fly).